A 159-amino-acid polypeptide reads, in one-letter code: Peripheral myelin protein 22 (159 aa).

Residue Met-1 is a topological domain, cytoplasmic. Residues 2–31 (LLLLLGIIVLHVAVLVLLFVATIVSQWIVG) traverse the membrane as a helical segment. At 32–64 (NGHATDLWQNCSTTSGNVQHCLSSSANEWLQSV) the chain is on the extracellular side. A glycan (N-linked (GlcNAc...) asparagine) is linked at Asn-41. The helical transmembrane segment at 65 to 91 (QATMILSIIFSVLSLFLFFCQLFTLTK) threads the bilayer. Over 92 to 95 (GGRF) the chain is Cytoplasmic. A helical membrane pass occupies residues 96 to 119 (YITGIFQILAGLCVMSAASIYTVR). Topologically, residues 120–133 (HPEWHLDSAYSYGF) are extracellular. The chain crosses the membrane as a helical span at residues 134–156 (AYILAWVAFPLALLSGVVYVILR). Residues 157-159 (KRE) are Cytoplasmic-facing.

It belongs to the PMP-22/EMP/MP20 family. Ubiquitinated by the DCX(DCAF13) E3 ubiquitin ligase complex, leading to its degradation.

It is found in the cell membrane. Might be involved in growth regulation, and in myelinization in the peripheral nervous system. This is Peripheral myelin protein 22 (PMP22) from Equus caballus (Horse).